A 2779-amino-acid polypeptide reads, in one-letter code: Protein lava lamp (2779 aa).

3 disordered regions span residues leucine 31 to lysine 62, alanine 79 to serine 98, and lysine 110 to leucine 135. Residues glycine 33–glycine 51 are compositionally biased toward polar residues. A phosphoserine mark is found at serine 34 and serine 35. Positions threonine 52 to aspartate 85 form a coiled coil. Residues alanine 79–serine 91 are compositionally biased toward basic and acidic residues. A phosphoserine mark is found at serine 95, serine 98, serine 122, and serine 133. The stretch at glutamate 141–isoleucine 175 forms a coiled coil. Serine 186, serine 352, and serine 354 each carry phosphoserine. Coiled coils occupy residues glutamate 220–isoleucine 607 and glycine 659–isoleucine 716. A compositionally biased stretch (basic and acidic residues) spans glutamate 337–serine 352. 4 disordered regions span residues glutamate 337–valine 366, arginine 622–leucine 662, arginine 711–serine 730, and glutamine 1716–alanine 1753. Low complexity-rich tracts occupy residues serine 717–serine 730 and glutamine 1716–glutamine 1740. Coiled coils occupy residues leucine 751–histidine 1733, threonine 1785–glutamine 1863, and asparagine 1941–asparagine 2433. Disordered stretches follow at residues glutamate 2348–valine 2367, glutamate 2484–serine 2507, asparagine 2552–glutamate 2578, and threonine 2633–asparagine 2665. The span at glutamine 2488–glutamine 2502 shows a compositional bias: low complexity. Positions glutamate 2504–glutamine 2544 form a coiled coil. Residues aspartate 2600–glutamate 2641 adopt a coiled-coil conformation. The span at serine 2643–asparagine 2665 shows a compositional bias: low complexity.

As to quaternary structure, interacts with CLIP-190 and spectrin separately.

It is found in the golgi apparatus. It localises to the cytoplasmic vesicle. Its subcellular location is the autophagosome. In terms of biological role, lva and spectrin may form a Golgi-based scaffold that mediates interaction of Golgi bodies with microtubules and facilitates Golgi-derived membrane secretion required for the formation of furrows during cellularization. Under starvation conditions recruited by ema to developing autophagsosomes where it may function in autophagosome growth. The protein is Protein lava lamp (lva) of Drosophila melanogaster (Fruit fly).